The primary structure comprises 795 residues: RalBP1-associated Eps domain-containing protein 1 (795 aa).

Positions 10–113 (EQKYYSDLFS…SKNEQESRLA (104 aa)) constitute an EH 1 domain. A disordered region spans residues 112–238 (LAASYSSDSE…NWVSFADTPP (127 aa)). Over residues 115–126 (SYSSDSENQGSY) the composition is skewed to polar residues. Phosphoserine is present on residues serine 145, serine 162, serine 166, and serine 170. Residues 156 to 168 (EQQEPVSPVVSPQ) are compositionally biased toward low complexity. A Phosphothreonine modification is found at threonine 173. A compositionally biased stretch (low complexity) spans 205–216 (GDAQAGSSAGDA). Phosphoserine is present on residues serine 272 and serine 273. In terms of domain architecture, EH 2 spans 285–374 (QRQYYVNQFK…ESLMPKLIDL (90 aa)). At tyrosine 288 the chain carries Phosphotyrosine. Serine 307 carries the post-translational modification Phosphoserine. The EF-hand domain occupies 318–353 (LPILELSHIWELSDFDKDGALTLDEFCAAFHLVVAR). Ca(2+) contacts are provided by aspartate 331, aspartate 333, aspartate 335, and glutamate 342. 2 disordered regions span residues 380–433 (VGEQ…SSQT) and 469–720 (ELKR…DEHT). Polar residues predominate over residues 407–433 (LNQTWPELNQSSEQWETFSERSSSSQT). Serine 475, serine 482, and serine 489 each carry phosphoserine. 2 stretches are compositionally biased toward polar residues: residues 497–518 (INSS…SDSF) and 525–542 (IGSS…SPDN). Phosphoserine is present on serine 539. Threonine 543 is subject to Phosphothreonine. The segment covering 543 to 553 (TAPPPPPPRPQ) has biased composition (pro residues). Serine 561 carries the phosphoserine modification. A compositionally biased stretch (polar residues) spans 562–573 (LDMNRTFAVTTG). Low complexity predominate over residues 574–583 (QQQAGVVAHP). A compositionally biased stretch (pro residues) spans 584-595 (PAVPPRPQPSQA). 2 stretches are compositionally biased toward polar residues: residues 611–622 (THTSTSPQQIPE) and 681–692 (ATNVPANVSKGT). The interaction with RALBP1 stretch occupies residues 651–795 (HPEVLPAEKA…LEQLRPFSHL (145 aa)). Residues 707–720 (KSEDELRPDVDEHT) show a composition bias toward basic and acidic residues. Residues serine 708 and serine 739 each carry the phosphoserine modification. Residues 750–790 (SIRRNKETNTVLARLNSELQQQLKDVLEERISLEVQLEQLR) adopt a coiled-coil conformation.

Homodimer (Potential). Interacts with RALBP1, CRK and GRB2. Binding to RALBP1 does not affect its Ral-binding activity. Forms a complex with the SH3 domains of CRK and GRB2 which may link it to an EGF-responsive tyrosine kinase. Interacts with RAB11FIP2. Interacts with AMPH, ITSN1 (via SH3 domains) and SGIP1; may be involved in clathrin-mediated endocytosis. In terms of processing, EGF stimulates phosphorylation on Tyr-residues. In terms of tissue distribution, expressed in all tissues examined. The highest level expression was found in the kidney and testis.

The protein localises to the membrane. The protein resides in the clathrin-coated pit. Functionally, may coordinate the cellular actions of activated EGF receptors and Ral-GTPases. The sequence is that of RalBP1-associated Eps domain-containing protein 1 (Reps1) from Mus musculus (Mouse).